The following is a 457-amino-acid chain: tRNA-2-methylthio-N(6)-dimethylallyladenosine synthase (457 aa).

The 118-residue stretch at 3–120 (KKVYVKTFGC…LPQMIDARRT (118 aa)) folds into the MTTase N-terminal domain. [4Fe-4S] cluster contacts are provided by Cys12, Cys49, Cys83, Cys157, Cys161, and Cys164. The region spanning 143–377 (RVEGPTAFVS…QATIEENVAR (235 aa)) is the Radical SAM core domain. In terms of domain architecture, TRAM spans 380–447 (QSMVGKVERI…PHSLRGELVL (68 aa)).

This sequence belongs to the methylthiotransferase family. MiaB subfamily. Monomer. The cofactor is [4Fe-4S] cluster.

Its subcellular location is the cytoplasm. It catalyses the reaction N(6)-dimethylallyladenosine(37) in tRNA + (sulfur carrier)-SH + AH2 + 2 S-adenosyl-L-methionine = 2-methylsulfanyl-N(6)-dimethylallyladenosine(37) in tRNA + (sulfur carrier)-H + 5'-deoxyadenosine + L-methionine + A + S-adenosyl-L-homocysteine + 2 H(+). In terms of biological role, catalyzes the methylthiolation of N6-(dimethylallyl)adenosine (i(6)A), leading to the formation of 2-methylthio-N6-(dimethylallyl)adenosine (ms(2)i(6)A) at position 37 in tRNAs that read codons beginning with uridine. The chain is tRNA-2-methylthio-N(6)-dimethylallyladenosine synthase from Burkholderia multivorans (strain ATCC 17616 / 249).